A 537-amino-acid chain; its full sequence is 5,6-dihydroxyindole-2-carboxylic acid oxidase (537 aa).

The first 24 residues, 1 to 24, serve as a signal peptide directing secretion; the sequence is MSAPKLLSLGCIFFPLLLFQQARA. The Lumenal, melanosome segment spans residues 25-477; that stretch reads QFPRQCATVE…WPSREFSVPE (453 aa). Intrachain disulfides connect Cys-30-Cys-41, Cys-42-Cys-65, Cys-56-Cys-99, Cys-101-Cys-110, and Cys-113-Cys-122. N-linked (GlcNAc...) asparagine glycans are attached at residues Asn-96 and Asn-104. Asn-181 is a glycosylation site (N-linked (GlcNAc...) asparagine). Zn(2+) is bound by residues His-192, His-215, and His-224. Cystine bridges form between Cys-258–Cys-261 and Cys-290–Cys-303. N-linked (GlcNAc...) asparagine glycosylation is found at Asn-304 and Asn-350. Residues His-377 and His-381 each contribute to the Zn(2+) site. Asn-385 is a glycosylation site (N-linked (GlcNAc...) asparagine). Zn(2+) is bound at residue His-404. A helical transmembrane segment spans residues 478 to 501; it reads IIAIAVVGALLLVALIFGTASYLI. Topologically, residues 502–537 are cytoplasmic; the sequence is RARRSMDEANQPLLTDQYQCYAEEYEKLQNPNQSVV.

This sequence belongs to the tyrosinase family. Monomer. Interacts with ATP7A. Interacts with SLC45A2. The cofactor is Cu(2+). It depends on Zn(2+) as a cofactor. Post-translationally, glycosylated. Pigment cells.

The protein resides in the melanosome membrane. The enzyme catalyses 2 5,6-dihydroxyindole-2-carboxylate + O2 = 2 indole-5,6-quinone-2-carboxylate + 2 H2O. It functions in the pathway pigment biosynthesis; melanin biosynthesis. With respect to regulation, the activity depends critically on the nature of the bound metal ion. Catalyzes the oxidation of 5,6-dihydroxyindole-2-carboxylic acid (DHICA) in the presence of bound Cu(2+) ions, but lacks activity in the presence of bound Zn(2+) ions. Plays a role in melanin biosynthesis. Catalyzes the oxidation of 5,6-dihydroxyindole-2-carboxylic acid (DHICA) into indole-5,6-quinone-2-carboxylic acid in the presence of bound Cu(2+) ions, but not in the presence of Zn(2+). May regulate or influence the type of melanin synthesized. Also to a lower extent, capable of hydroxylating tyrosine and producing melanin. This Homo sapiens (Human) protein is 5,6-dihydroxyindole-2-carboxylic acid oxidase.